Here is an 842-residue protein sequence, read N- to C-terminus: MASPMEAVARSSLVLAPRRRRALGLLPAAAAAAPFVLDCRRRHNGGMRRPHVSFACSAELDTGRRQLPSTGTRAVMSSCPGYVEGRMVGENTSQINMGWEARILRHLENPEFLPSSYDIAWVAMVPLPGTDHLQAPCFPECVEWILQNQHSNGSWGVNEFDSSASKDILLSTLACIIALEKWNVGSEQIRRGLHFIAKNFSIVIDDQIAAPIGFNLTFPAMVNLAIKMGLEFPASEISIDQILHLRDMELKRLAGDESLGKEAYFAYIAEGLEESMVDWSEVMKFQGKNGSLFNSPAATAAALVHRYDDKALGYLYSVVNKFGGEVPTVYPLNIFSQLSMVDTLVNIGISRHFSSDIKRILDKTYILWSQRDEEVMLDLPTCAMAFRLLRMNGYGVSSDDLSHVAEASTFHNSVEGYLDDTKSLLELYKASKVSLSENEPILEKMGCWSGSLLKEKLCSDDIRGTPILREVEYALKFPFYATLEPLDHKWNIENFDARAYQKIKTKNMPCHVNEDLLALAAEDFSFCQSTYQNEIQHLESWEKENKLDQLEFTRKNLINSYLSAAATISPYELSDARIACAKSIALTLVADDFFDVGSSKEEQENLISLVEKWDQYHKVEFYSENVKAVFFALYSTVNQLGAMASAVQNRDVTKYNVESWLDYLRSLATDAEWQRSKYVPTMEEYMKNSIVTFALGPTILIALYFMGQNLWEDIVKNAEYDELFRLMNTCGRLQNDIQSFERECKDGKLNSVSLLVLDSKDVMSVEEAKEAINESISSCRRELLRLVVREDGVIPKSCKEMFWNLYKTSHVFYSQADGFSSPKEMMGAMNGVIFEPLKTRGN.

The N-terminal 56 residues, 1–56 (MASPMEAVARSSLVLAPRRRRALGLLPAAAAAAPFVLDCRRRHNGGMRRPHVSFAC), are a transit peptide targeting the chloroplast. Residues Asp591, Asp595, Asn735, Ser739, and Glu743 each coordinate Mg(2+). Positions 591-595 (DDFFD) match the DDXXD motif motif.

It belongs to the terpene synthase family. The cofactor is Mg(2+). As to expression, expressed in roots.

It localises to the plastid. Its subcellular location is the chloroplast. The enzyme catalyses 9alpha-copalyl diphosphate = 9beta-pimara-7,15-diene + diphosphate. Its function is as follows. Involved in the biosynthesis of momilactone A and B phytoalexins. Catalyzes the conversion of syn-copalyl diphosphate to the phytoalexin precursor syn-pimara-7,15-diene. In Oryza sativa subsp. japonica (Rice), this protein is 9-beta-pimara-7,15-diene synthase, chloroplastic.